The chain runs to 246 residues: 3'(2'),5'-bisphosphate nucleotidase CysQ (246 aa).

Mg(2+) contacts are provided by glutamate 64, aspartate 83, leucine 85, aspartate 86, and aspartate 205. Glutamate 64 contributes to the substrate binding site. Residues leucine 85–threonine 88 and aspartate 205 each bind substrate.

It belongs to the inositol monophosphatase superfamily. CysQ family. Mg(2+) is required as a cofactor.

The protein resides in the cell inner membrane. It carries out the reaction adenosine 3',5'-bisphosphate + H2O = AMP + phosphate. In terms of biological role, converts adenosine-3',5'-bisphosphate (PAP) to AMP. The chain is 3'(2'),5'-bisphosphate nucleotidase CysQ from Shigella flexneri.